The following is a 254-amino-acid chain: Isoprenyl transferase (254 aa).

Asp-12 is a catalytic residue. Mg(2+) is bound at residue Asp-12. Substrate contacts are provided by residues 13–16 (GNGR), Trp-17, Arg-25, His-29, and 57–59 (SSE). Catalysis depends on Asn-60, which acts as the Proton acceptor. Substrate contacts are provided by residues Trp-61, Arg-63, Arg-180, and 186–188 (RLS). Position 199 (Glu-199) interacts with Mg(2+).

It belongs to the UPP synthase family. Homodimer. Requires Mg(2+) as cofactor.

Functionally, catalyzes the condensation of isopentenyl diphosphate (IPP) with allylic pyrophosphates generating different type of terpenoids. In Brucella abortus biovar 1 (strain 9-941), this protein is Isoprenyl transferase.